Here is a 311-residue protein sequence, read N- to C-terminus: Porphobilinogen deaminase (311 aa).

Cys-245 carries the S-(dipyrrolylmethanemethyl)cysteine modification.

The protein belongs to the HMBS family. As to quaternary structure, monomer. It depends on dipyrromethane as a cofactor.

The enzyme catalyses 4 porphobilinogen + H2O = hydroxymethylbilane + 4 NH4(+). Its pathway is porphyrin-containing compound metabolism; protoporphyrin-IX biosynthesis; coproporphyrinogen-III from 5-aminolevulinate: step 2/4. Tetrapolymerization of the monopyrrole PBG into the hydroxymethylbilane pre-uroporphyrinogen in several discrete steps. The sequence is that of Porphobilinogen deaminase from Deinococcus deserti (strain DSM 17065 / CIP 109153 / LMG 22923 / VCD115).